Consider the following 20-residue polypeptide: Dahlein-5.3 (20 aa).

Expressed by the skin dorsal glands.

The protein localises to the secreted. Has no antimicrobial activity. Strongly inhibits the formation of NO by neuronal nitric oxide synthase at micromolar concentrations. The chain is Dahlein-5.3 from Ranoidea dahlii (Dahl's aquatic frog).